Reading from the N-terminus, the 213-residue chain is uncharacterized protein (213 aa).

Coiled coils occupy residues 54–78 and 108–151; these read KEQT…NLKL and VKDV…STSK. The segment covering 122–142 has biased composition (basic and acidic residues); sequence IEKEKEEEKAAKKAEKAEEKK. Positions 122–213 are disordered; sequence IEKEKEEEKA…FGGKPTGQIW (92 aa). Low complexity predominate over residues 146–188; it reads KNSTSKSGSKSSKSSSGSSKSSSKSSKSSKSSSGSSKSSSKSS. Basic residues predominate over residues 189–199; the sequence is KNSKKSSKKSN.

This sequence belongs to the mimivirus R546 family.

This is an uncharacterized protein from Acanthamoeba polyphaga (Amoeba).